The sequence spans 151 residues: Sec-independent protein translocase protein TatB (151 aa).

A helical membrane pass occupies residues 1 to 21 (MFDIGFLELLICGVIALLVLG). 2 stretches are compositionally biased toward basic and acidic residues: residues 87-99 (KYEH…DQTR) and 122-132 (EPPHEPVRDEA). Residues 87-151 (KYEHMILPDD…SPTSPSDKYS (65 aa)) are disordered. Low complexity predominate over residues 134 to 151 (ASDQPSDSSPTSPSDKYS).

Belongs to the TatB family. The Tat system comprises two distinct complexes: a TatABC complex, containing multiple copies of TatA, TatB and TatC subunits, and a separate TatA complex, containing only TatA subunits. Substrates initially bind to the TatABC complex, which probably triggers association of the separate TatA complex to form the active translocon.

It localises to the cell inner membrane. Functionally, part of the twin-arginine translocation (Tat) system that transports large folded proteins containing a characteristic twin-arginine motif in their signal peptide across membranes. Together with TatC, TatB is part of a receptor directly interacting with Tat signal peptides. TatB may form an oligomeric binding site that transiently accommodates folded Tat precursor proteins before their translocation. The sequence is that of Sec-independent protein translocase protein TatB from Marinobacter nauticus (strain ATCC 700491 / DSM 11845 / VT8) (Marinobacter aquaeolei).